We begin with the raw amino-acid sequence, 356 residues long: CMP-sialic acid transporter 2 (356 aa).

Basic and acidic residues predominate over residues 1–24 (MEYRRVKDQESYDVVSQKDIESPG). Residues 1-43 (MEYRRVKDQESYDVVSQKDIESPGERSLSSTSATSSLSTAGAS) form a disordered region. Topologically, residues 1 to 52 (MEYRRVKDQESYDVVSQKDIESPGERSLSSTSATSSLSTAGASKGNNSWKLK) are cytoplasmic. A compositionally biased stretch (low complexity) spans 27 to 43 (SLSSTSATSSLSTAGAS). The chain crosses the membrane as a helical span at residues 53–73 (SIVTLALTLLTSSQAILIVWS). The Lumenal portion of the chain corresponds to 74–82 (KRAGKYEYS). A helical transmembrane segment spans residues 83-103 (VTTANFSVEALKCLLSLIALY). The Cytoplasmic segment spans residues 104-125 (RTWNSQGVTEDNRLSTSFDEVS). A helical transmembrane segment spans residues 126-146 (VYPIPAILYMVKNLLQYYIFA). At 147 to 149 (YVD) the chain is on the lumenal side. The helical transmembrane segment at 150–172 (APAYQILKNLNIISTGVLYRIIL) threads the bilayer. The Cytoplasmic portion of the chain corresponds to 173 to 175 (KKK). A helical transmembrane segment spans residues 176-196 (LSEIQWAAFILLCAGCTTAQL). Over 197-211 (NPSSDHVLQTPIQGW) the chain is Lumenal. A helical transmembrane segment spans residues 212–232 (VMAIVMALLSGFAGVYTEAII). Residues 233–239 (KKRPSRN) lie on the Cytoplasmic side of the membrane. Residues 240 to 260 (INVQNFWLYIFGMLFNLVAIC) traverse the membrane as a helical segment. At 261–277 (VQDFDAVMNKGFFHGYS) the chain is on the lumenal side. The helical transmembrane segment at 278 to 298 (FITVLMILNHALSGIAVSMVM) threads the bilayer. Over 299-314 (KYADNIVKVYSTSVAM) the chain is Cytoplasmic. Residues 315 to 335 (LLTAVVSVFLFGFHLSLAFFL) traverse the membrane as a helical segment. Over 336–356 (GSTVVSVSVYLHSVGKPQPQK) the chain is Lumenal.

It belongs to the nucleotide-sugar transporter family. CMP-Sialate:CMP antiporter (TC 2.A.7.12) subfamily.

The protein resides in the golgi apparatus membrane. Functionally, sugar transporter involved in the transport of CMP-sialic acid from the cytoplasm into the Golgi. May transport important nucleotide sugars such as CMP-Kdo (2-keto-3-deoxy-D-manno-octulosonic acid) in physiological conditions. The polypeptide is CMP-sialic acid transporter 2 (Oryza sativa subsp. indica (Rice)).